The primary structure comprises 239 residues: RNA polymerase sigma factor FliA (239 aa).

The sigma-70 factor domain-2 stretch occupies residues 16-88 (LWQRYVPLVR…MLDELRSRDW (73 aa)). The Interaction with polymerase core subunit RpoC motif lies at 43-46 (DLLQ). The segment at 96–166 (NAREVAQAIG…IELVTDDHQR (71 aa)) is sigma-70 factor domain-3. A sigma-70 factor domain-4 region spans residues 185-233 (AIETLPEREKLVLTLYYQEELNLKEIGAVLEVGESRVSQLHSQAIKRLR). Positions 207-226 (LKEIGAVLEVGESRVSQLHS) form a DNA-binding region, H-T-H motif.

Belongs to the sigma-70 factor family. FliA subfamily.

Its subcellular location is the cytoplasm. Its function is as follows. Sigma factors are initiation factors that promote the attachment of RNA polymerase to specific initiation sites and are then released. This sigma factor controls the expression of flagella-related genes. This chain is RNA polymerase sigma factor FliA, found in Escherichia coli O157:H7.